We begin with the raw amino-acid sequence, 3412 residues long: Genome polyprotein (3412 aa).

Residues 1-104 (MSGRKAQGKT…LSSRKRRSNE (104 aa)) lie on the Cytoplasmic side of the membrane. The hydrophobic; homodimerization of capsid protein C stretch occupies residues 38 to 72 (PGPSRGVQGFIFFFLFNILTGKKLTAHLKKLWRML). The propeptide at 102-121 (SNEMALFPLLLLGLLALSGG) is ER anchor for the capsid protein C, removed in mature form by serine protease NS3. The chain crosses the membrane as a helical span at residues 105–125 (MALFPLLLLGLLALSGGVTLV). The Extracellular segment spans residues 126 to 244 (RKNRWLLLNV…GERQLQKIER (119 aa)). N-linked (GlcNAc...) asparagine; by host glycans are attached at residues Asn-134 and Asn-150. A helical transmembrane segment spans residues 245–265 (WLVRNPFFAVTALAIAYLVGN). The Cytoplasmic portion of the chain corresponds to 266–270 (NTTQR). Residues 271–285 (VVIALLVLAVGPAYS) form a helical membrane-spanning segment. Topologically, residues 286–730 (AHCIGITDRD…TVFGSAFQGL (445 aa)) are extracellular. 8 disulfide bridges follow: Cys-288-Cys-315, Cys-345-Cys-401, Cys-345-Cys-406, Cys-359-Cys-390, Cys-377-Cys-401, Cys-377-Cys-406, Cys-467-Cys-568, and Cys-585-Cys-615. The segment at 383 to 396 (DRGWGNGCGLFGKG) is fusion peptide. The helical transmembrane segment at 731 to 751 (FGGLSWITKVIMGAVLIWVGI) threads the bilayer. The Extracellular portion of the chain corresponds to 752–757 (NTRNMT). The helical transmembrane segment at 758–778 (MSMSMILVGVIMMFLSLGVGA) threads the bilayer. At 779-1132 (DQGCAVNFGK…LVRSWVTAGE (354 aa)) the chain is on the extracellular side. Disulfide bonds link Cys-782/Cys-793, Cys-833/Cys-921, Cys-957/Cys-1002, Cys-1058/Cys-1107, Cys-1069/Cys-1091, and Cys-1090/Cys-1094. Residues Asn-908 and Asn-986 are each glycosylated (N-linked (GlcNAc...) asparagine; by host). The chain crosses the membrane as a helical span at residues 1133 to 1153 (VHAVPFGLVSMMIAMEVVLRR). At 1154 to 1201 (RQGPKQMLVGGVVLLGAMLVGQVTVLDLVKFVVAVGLHFHEINNGGDA) the chain is on the cytoplasmic side. A helical membrane pass occupies residues 1202-1222 (MYMALIASFSIRPGLLMGFGL). Over 1223–1287 (RTLWSPRERL…ILPLMALMTP (65 aa)) the chain is Lumenal. The helical transmembrane segment at 1288–1308 (MTMHEVRMATMLFCTVVIIGV) threads the bilayer. Residues 1309-1355 (LHQNSKDTSMQKTIPIVALTLTSYMGLTQPFLGLCAYMSTQVFGRRS) lie on the Cytoplasmic side of the membrane. The chain crosses the membrane as a helical span at residues 1356 to 1376 (IPVNEALAAAGLVGVLAGLAF). The Lumenal segment spans residues 1377-1378 (QD). A helical transmembrane segment spans residues 1379 to 1399 (MENFLGPIAVGGILMMLVSVA). Residues 1400-1456 (GRVDGLELKKLGEISWEEEAEISGSSSRYDVALSEQGEFKLLSEDKVPWDQIVMTSL) lie on the Cytoplasmic side of the membrane. The interval 1407 to 1446 (LKKLGEISWEEEAEISGSSSRYDVALSEQGEFKLLSEDKV) is interacts with and activates NS3 protease. Residues 1457–1477 (ALVGAAIHPFALLLVLGGWIL) constitute an intramembrane region (helical). Over 1478–2157 (HIKGARRSGD…RNALSMMPEA (680 aa)) the chain is Cytoplasmic. The 181-residue stretch at 1485–1665 (SGDVLWDIPT…ELKEESKEEL (181 aa)) folds into the Peptidase S7 domain. Active-site charge relay system; for serine protease NS3 activity residues include His-1537, Asp-1561, and Ser-1622. In terms of domain architecture, Helicase ATP-binding spans 1669 to 1825 (PTMLKKGMTT…HSNGEIEDVQ (157 aa)). The tract at residues 1673–1676 (KKGM) is important for RNA-binding. 1682-1689 (FHPGAGKT) serves as a coordination point for ATP. The DEAH box motif lies at 1773-1776 (DEAH). The region spanning 1836–1997 (GHEWILADKR…VRGGMVAPLY (162 aa)) is the Helicase C-terminal domain. Lys-1877 carries the post-translational modification N6-acetyllysine; by host. A disordered region spans residues 1942–1963 (AAQRRGRIGRNPNRDGDSYYYS). A helical transmembrane segment spans residues 2158-2178 (MTIVMLFLLAGLLTSGAVIFF). Residues 2179–2186 (MSPKGMSR) lie on the Lumenal side of the membrane. The helical intramembrane region spans 2187–2207 (MSMAMGTMAGSGYLMFLGGVK). Topologically, residues 2208 to 2209 (PT) are lumenal. A helical transmembrane segment spans residues 2210-2230 (HISYVMLIFFVLMVVVIPEPG). Over 2231–2241 (QQRTIQDNQVA) the chain is Cytoplasmic. The helical transmembrane segment at 2242 to 2262 (YLIIGILTLLSVVAANELGML) threads the bilayer. Residues 2263-2293 (EKTKEDFFGKRDITTPSGAIPWSWPDLDLKP) lie on the Lumenal side of the membrane. Residues 2294 to 2314 (GAAWTVYVGIVTMLSPMLHHW) constitute an intramembrane region (helical). The Lumenal portion of the chain corresponds to 2315–2360 (IKVEYGNLSLSGIAQSASVLSFMDKGIPFMKMNISVVILLVSGWNS). The chain crosses the membrane as a helical span at residues 2361-2380 (ITVIPLLCGIGGAMLHWTLI). Over 2381–2421 (LPGIKAQQSKLAQKRVFHGVAKNPVVDGNPTADIEEAPEMP) the chain is Cytoplasmic. The chain crosses the membrane as a helical span at residues 2422–2442 (ALYEKKLALYLLLALSLMSVA). At 2443 to 2445 (MCR) the chain is on the lumenal side. A helical transmembrane segment spans residues 2446–2466 (TPFSLAEGIVLSSAALGPLIE). Topologically, residues 2467-3411 (GNTSLLWNGP…VDADLQPGEL (945 aa)) are cytoplasmic. The mRNA cap 0-1 NS5-type MT domain occupies 2508–2772 (GSASGKTLGE…DVILPIGTRS (265 aa)). Ser-2563 contacts S-adenosyl-L-methionine. Residue Ser-2563 is modified to Phosphoserine. Lys-2568 serves as the catalytic For 2'-O-MTase activity. Residues Gly-2593, Trp-2594, Thr-2611, Leu-2612, Asp-2638, and Val-2639 each contribute to the S-adenosyl-L-methionine site. Asp-2653 functions as the For 2'-O-MTase activity in the catalytic mechanism. Ile-2654 contacts S-adenosyl-L-methionine. Residues Lys-2689 and Glu-2725 each act as for 2'-O-MTase activity in the active site. Tyr-2727 serves as a coordination point for S-adenosyl-L-methionine. The Nuclear localization signal signature appears at 2879–2912 (RKIMKVVNRWLFRHLSREKNPRLCTKEEFIAKVR). Residues Glu-2946, His-2950, Cys-2955, and Cys-2958 each coordinate Zn(2+). The region spanning 3036–3188 (GGFYADDTAG…RPVDDRFGLA (153 aa)) is the RdRp catalytic domain. Zn(2+)-binding residues include His-3223, Cys-3239, and Cys-3358.

It in the N-terminal section; belongs to the class I-like SAM-binding methyltransferase superfamily. mRNA cap 0-1 NS5-type methyltransferase family. As to quaternary structure, homodimer. Interacts (via N-terminus) with host EXOC1 (via C-terminus); this interaction results in EXOC1 degradation through the proteasome degradation pathway. In terms of assembly, forms heterodimers with envelope protein E in the endoplasmic reticulum and Golgi. Homodimer; in the endoplasmic reticulum and Golgi. Interacts with protein prM. Interacts with non-structural protein 1. As to quaternary structure, homodimer; Homohexamer when secreted. Interacts with envelope protein E. In terms of assembly, interacts (via N-terminus) with serine protease NS3. Forms a heterodimer with serine protease NS3. May form homooligomers. As to quaternary structure, forms a heterodimer with NS2B. Interacts with non-structural protein 2A (via N-terminus). Interacts with NS4B. Interacts with unphosphorylated RNA-directed RNA polymerase NS5; this interaction stimulates RNA-directed RNA polymerase NS5 guanylyltransferase activity. NS3 interacts with host PDCD6IP; this interaction contributes to virion release. In terms of assembly, interacts with serine protease NS3. Homodimer. Interacts with host STAT2; this interaction prevents the establishment of cellular antiviral state. Interacts with serine protease NS3. Interacts with host TRIM23; this interaction leads to NS5 ubiquitination. Specific enzymatic cleavages in vivo yield mature proteins. The nascent capsid protein C contains a C-terminal hydrophobic domain that act as a signal sequence for translocation of prM into the lumen of the ER. Mature capsid protein C is cleaved at a site upstream of this hydrophobic domain by NS3. prM is cleaved in post-Golgi vesicles by a host furin, releasing the mature small envelope protein M, and peptide pr. Non-structural protein 2A-alpha, a C-terminally truncated form of non-structural protein 2A, results from partial cleavage by NS3. Specific enzymatic cleavages in vivo yield mature proteins peptide 2K acts as a signal sequence and is removed from the N-terminus of NS4B by the host signal peptidase in the ER lumen. Signal cleavage at the 2K-4B site requires a prior NS3 protease-mediated cleavage at the 4A-2K site. Post-translationally, cleaved in post-Golgi vesicles by a host furin, releasing the mature small envelope protein M, and peptide pr. This cleavage is incomplete as up to 30% of viral particles still carry uncleaved prM. In terms of processing, N-glycosylated. N-glycosylated. The excreted form is glycosylated and this is required for efficient secretion of the protein from infected cells. Post-translationally, polyubiquitinated; ubiquitination is probably mediated by host TRIM23 and is prerequisite for NS5-STAT2 interaction. NS5 is not ISGylated or sumoylated. In terms of processing, acetylated by host KAT5. Acetylation modulates NS3 RNA-binding and unwinding activities and plays an important positive role for viral replication. Phosphorylated on serines residues. This phosphorylation may trigger NS5 nuclear localization.

It localises to the virion. The protein localises to the host nucleus. It is found in the host cytoplasm. Its subcellular location is the host perinuclear region. The protein resides in the secreted. It localises to the virion membrane. The protein localises to the host endoplasmic reticulum membrane. The catalysed reaction is Selective hydrolysis of -Xaa-Xaa-|-Yaa- bonds in which each of the Xaa can be either Arg or Lys and Yaa can be either Ser or Ala.. It catalyses the reaction RNA(n) + a ribonucleoside 5'-triphosphate = RNA(n+1) + diphosphate. The enzyme catalyses a ribonucleoside 5'-triphosphate + H2O = a ribonucleoside 5'-diphosphate + phosphate + H(+). It carries out the reaction ATP + H2O = ADP + phosphate + H(+). The catalysed reaction is a 5'-end (5'-triphosphoguanosine)-ribonucleoside in mRNA + S-adenosyl-L-methionine = a 5'-end (N(7)-methyl 5'-triphosphoguanosine)-ribonucleoside in mRNA + S-adenosyl-L-homocysteine. It catalyses the reaction a 5'-end (N(7)-methyl 5'-triphosphoguanosine)-ribonucleoside in mRNA + S-adenosyl-L-methionine = a 5'-end (N(7)-methyl 5'-triphosphoguanosine)-(2'-O-methyl-ribonucleoside) in mRNA + S-adenosyl-L-homocysteine + H(+). Its function is as follows. Plays a role in virus budding by binding to the cell membrane and gathering the viral RNA into a nucleocapsid that forms the core of a mature virus particle. During virus entry, may induce genome penetration into the host cytoplasm after hemifusion induced by the surface proteins. Can migrate to the cell nucleus where it modulates host functions. Inhibits RNA silencing by interfering with host Dicer. In terms of biological role, prevents premature fusion activity of envelope proteins in trans-Golgi by binding to envelope protein E at pH6.0. After virion release in extracellular space, gets dissociated from E dimers. Functionally, acts as a chaperone for envelope protein E during intracellular virion assembly by masking and inactivating envelope protein E fusion peptide. prM is the only viral peptide matured by host furin in the trans-Golgi network probably to avoid catastrophic activation of the viral fusion activity in acidic Golgi compartment prior to virion release. prM-E cleavage is inefficient, and many virions are only partially matured. These uncleaved prM would play a role in immune evasion. Its function is as follows. May play a role in virus budding. Exerts cytotoxic effects by activating a mitochondrial apoptotic pathway through M ectodomain. May display a viroporin activity. Binds to host cell surface receptor and mediates fusion between viral and cellular membranes. Envelope protein is synthesized in the endoplasmic reticulum in the form of heterodimer with protein prM. They play a role in virion budding in the ER, and the newly formed immature particle is covered with 60 spikes composed of heterodimer between precursor prM and envelope protein E. The virion is transported to the Golgi apparatus where the low pH causes dissociation of PrM-E heterodimers and formation of E homodimers. prM-E cleavage is inefficient, and many virions are only partially matured. These uncleaved prM would play a role in immune evasion. In terms of biological role, involved in immune evasion, pathogenesis and viral replication. Once cleaved off the polyprotein, is targeted to three destinations: the viral replication cycle, the plasma membrane and the extracellular compartment. Essential for viral replication. Required for formation of the replication complex and recruitment of other non-structural proteins to the ER-derived membrane structures. Excreted as a hexameric lipoparticle that plays a role against host immune response. Antagonizing the complement function. Binds to the host macrophages and dendritic cells. Inhibits signal transduction originating from Toll-like receptor 3 (TLR3). Functionally, component of the viral RNA replication complex that functions in virion assembly and antagonizes the host immune response. Its function is as follows. Required cofactor for the serine protease function of NS3. May have membrane-destabilizing activity and form viroporins. Displays three enzymatic activities: serine protease, NTPase and RNA helicase. NS3 serine protease, in association with NS2B, performs its autocleavage and cleaves the polyprotein at dibasic sites in the cytoplasm: C-prM, NS2A-NS2B, NS2B-NS3, NS3-NS4A, NS4A-2K and NS4B-NS5. NS3 RNA helicase binds RNA and unwinds dsRNA in the 3' to 5' direction. Also plays a role in virus assembly. In terms of biological role, regulates the ATPase activity of the NS3 helicase activity. NS4A allows NS3 helicase to conserve energy during unwinding. Functionally, functions as a signal peptide for NS4B and is required for the interferon antagonism activity of the latter. Its function is as follows. Induces the formation of ER-derived membrane vesicles where the viral replication takes place. Inhibits interferon (IFN)-induced host STAT1 phosphorylation and nuclear translocation, thereby preventing the establishment of cellular antiviral state by blocking the IFN-alpha/beta pathway. Replicates the viral (+) and (-) RNA genome, and performs the capping of genomes in the cytoplasm. NS5 methylates viral RNA cap at guanine N-7 and ribose 2'-O positions. Besides its role in RNA genome replication, also prevents the establishment of cellular antiviral state by blocking the interferon-alpha/beta (IFN-alpha/beta) signaling pathway. IFN-I induces binding of NS5 to host IFN-activated transcription factor STAT2, preventing its transcriptional activity. Host TRIM23 is the E3 ligase that interacts with and polyubiquitinates NS5 to promote its binding to STAT2 and trigger IFN-I signaling inhibition. The polypeptide is Genome polyprotein (Aedes aegypti (Yellowfever mosquito)).